A 138-amino-acid chain; its full sequence is Large ribosomal subunit protein bL17 (138 aa).

The protein belongs to the bacterial ribosomal protein bL17 family. In terms of assembly, part of the 50S ribosomal subunit. Contacts protein L32.

The protein is Large ribosomal subunit protein bL17 of Dinoroseobacter shibae (strain DSM 16493 / NCIMB 14021 / DFL 12).